We begin with the raw amino-acid sequence, 213 residues long: Pyrrolidone-carboxylate peptidase (213 aa).

Residues E80, C143, and H166 contribute to the active site.

Belongs to the peptidase C15 family. Homotetramer.

The protein localises to the cytoplasm. It catalyses the reaction Release of an N-terminal pyroglutamyl group from a polypeptide, the second amino acid generally not being Pro.. Its function is as follows. Removes 5-oxoproline from various penultimate amino acid residues except L-proline. The sequence is that of Pyrrolidone-carboxylate peptidase from Clavibacter michiganensis subsp. michiganensis (strain NCPPB 382).